An 882-amino-acid polypeptide reads, in one-letter code: Alanine--tRNA ligase (882 aa).

Zn(2+) contacts are provided by His570, His574, Cys672, and His676.

It belongs to the class-II aminoacyl-tRNA synthetase family. It depends on Zn(2+) as a cofactor.

Its subcellular location is the cytoplasm. It catalyses the reaction tRNA(Ala) + L-alanine + ATP = L-alanyl-tRNA(Ala) + AMP + diphosphate. Catalyzes the attachment of alanine to tRNA(Ala) in a two-step reaction: alanine is first activated by ATP to form Ala-AMP and then transferred to the acceptor end of tRNA(Ala). Also edits incorrectly charged Ser-tRNA(Ala) and Gly-tRNA(Ala) via its editing domain. The polypeptide is Alanine--tRNA ligase (Xanthomonas oryzae pv. oryzae (strain MAFF 311018)).